Reading from the N-terminus, the 351-residue chain is Methylthioribose-1-phosphate isomerase (351 aa).

Residues 51–53 (RGA), Arg94, and Gln199 each bind substrate. Asp240 (proton donor) is an active-site residue. A substrate-binding site is contributed by 250–251 (NK).

The protein belongs to the EIF-2B alpha/beta/delta subunits family. MtnA subfamily. Homodimer.

It carries out the reaction 5-(methylsulfanyl)-alpha-D-ribose 1-phosphate = 5-(methylsulfanyl)-D-ribulose 1-phosphate. Its pathway is amino-acid biosynthesis; L-methionine biosynthesis via salvage pathway; L-methionine from S-methyl-5-thio-alpha-D-ribose 1-phosphate: step 1/6. Catalyzes the interconversion of methylthioribose-1-phosphate (MTR-1-P) into methylthioribulose-1-phosphate (MTRu-1-P). This chain is Methylthioribose-1-phosphate isomerase, found in Bacillus cereus (strain ZK / E33L).